A 340-amino-acid polypeptide reads, in one-letter code: Putative 2-hydroxyacid dehydrogenase C1773.17c (340 aa).

NAD(+)-binding positions include 169–170, 249–251, and Asp-275; these read AI and TAR. Arg-251 is an active-site residue. Glu-280 is an active-site residue. His-298 functions as the Proton donor in the catalytic mechanism. NAD(+) is bound at residue 298-301; sequence HCGV.

Belongs to the D-isomer specific 2-hydroxyacid dehydrogenase family.

The chain is Putative 2-hydroxyacid dehydrogenase C1773.17c from Schizosaccharomyces pombe (strain 972 / ATCC 24843) (Fission yeast).